A 409-amino-acid chain; its full sequence is Peptidase T (409 aa).

H78 is a Zn(2+) binding site. The active site involves D80. D140 serves as a coordination point for Zn(2+). Residue E173 is the Proton acceptor of the active site. Positions 174, 196, and 379 each coordinate Zn(2+).

It belongs to the peptidase M20B family. The cofactor is Zn(2+).

The protein localises to the cytoplasm. The enzyme catalyses Release of the N-terminal residue from a tripeptide.. Cleaves the N-terminal amino acid of tripeptides. This Escherichia coli (strain SE11) protein is Peptidase T.